A 1054-amino-acid chain; its full sequence is Kinesin-like protein KIN-7G (1054 aa).

In terms of domain architecture, Kinesin motor spans 17-341; sequence KIFVSVRLRP…LLFASCAKEV (325 aa). Position 105–112 (105–112) interacts with ATP; the sequence is GQTSSGKT. 2 coiled-coil regions span residues 350–425 and 611–640; these read VMSD…IGEA and TETAEEKEEKEETEEKEEEEEERVKEVSSV. Disordered stretches follow at residues 600 to 648 and 740 to 760; these read CEPE…KEKS and ERAESNLKPSNSKRPPLPKHI. Over residues 613–631 the composition is skewed to acidic residues; the sequence is TAEEKEEKEETEEKEEEEE.

It belongs to the TRAFAC class myosin-kinesin ATPase superfamily. Kinesin family. KIN-7 subfamily.

The protein is Kinesin-like protein KIN-7G of Arabidopsis thaliana (Mouse-ear cress).